The sequence spans 144 residues: Large ribosomal subunit protein uL15 (144 aa).

A disordered region spans residues 1 to 48 (MRLNTLSPAAGSKSAAKRVGRGIGSGTGKTCGRGHKGQKSRSGGGVRI). A compositionally biased stretch (gly residues) spans 21 to 31 (RGIGSGTGKTC).

This sequence belongs to the universal ribosomal protein uL15 family. As to quaternary structure, part of the 50S ribosomal subunit.

Functionally, binds to the 23S rRNA. The protein is Large ribosomal subunit protein uL15 of Shewanella woodyi (strain ATCC 51908 / MS32).